A 407-amino-acid chain; its full sequence is Argininosuccinate synthase (407 aa).

ATP is bound by residues 10–18 and Ala-37; that span reads AYSGGLDTS. L-citrulline is bound by residues Tyr-90 and Ser-95. Gly-120 is a binding site for ATP. 3 residues coordinate L-aspartate: Thr-122, Asn-126, and Asp-127. Position 126 (Asn-126) interacts with L-citrulline. Positions 130, 181, 190, 266, and 278 each coordinate L-citrulline.

The protein belongs to the argininosuccinate synthase family. Type 1 subfamily. Homotetramer.

It is found in the cytoplasm. The catalysed reaction is L-citrulline + L-aspartate + ATP = 2-(N(omega)-L-arginino)succinate + AMP + diphosphate + H(+). Its pathway is amino-acid biosynthesis; L-arginine biosynthesis; L-arginine from L-ornithine and carbamoyl phosphate: step 2/3. The sequence is that of Argininosuccinate synthase from Ruegeria sp. (strain TM1040) (Silicibacter sp.).